Reading from the N-terminus, the 343-residue chain is uncharacterized protein (343 aa).

The disordered stretch occupies residues 66–89 (TQNPEPTSASTPPSASASSLPNGA). A compositionally biased stretch (low complexity) spans 71–84 (PTSASTPPSASASS). Residues 96 to 116 (GVIAGPIVGVLGGLIVLVIIF) form a helical membrane-spanning segment. Disordered regions lie at residues 161–191 (GGYQMHSTPWASSPRNSTIPQRSQSFYNDTR) and 252–343 (GRPL…SEHF). Polar residues predominate over residues 165–188 (MHSTPWASSPRNSTIPQRSQSFYN). Basic and acidic residues predominate over residues 280–289 (SNDDSDETKL). A compositionally biased stretch (low complexity) spans 290 to 299 (KQSSTESSSE). Basic and acidic residues-rich tracts occupy residues 301–311 (LDEKDKFDKNS) and 322–333 (SSYEHEISEEHK). The span at 334–343 (KHSKKRSEHF) shows a compositional bias: basic residues.

The protein resides in the golgi apparatus membrane. This is an uncharacterized protein from Schizosaccharomyces pombe (strain 972 / ATCC 24843) (Fission yeast).